A 199-amino-acid polypeptide reads, in one-letter code: Pre T-cell antigen receptor alpha (199 aa).

Residues 1–16 (MARTWLLLLLGVRCQA) form the signal peptide. The Extracellular segment spans residues 17–146 (LPSGIAGTPF…PEPLGGTQRQ (130 aa)). A disulfide bond links Cys47 and Cys107. 2 N-linked (GlcNAc...) asparagine glycosylation sites follow: Asn67 and Asn117. A helical membrane pass occupies residues 147–167 (VLWLSLLRLLLFKLLLLDVLL). Residues 168 to 199 (TCSHLRLHVLAGQHLQPPPSRKSLPPTHRIWT) lie on the Cytoplasmic side of the membrane.

As to quaternary structure, heterodimer with TCRB; disulfide linked. This heterodimer assembles with CD3 proteins into a signaling-competent pre-T-cell receptor complex. Interacts with RHBDD1. As to expression, isoform 1 is expressed at higher levels than isoform 2 in the thymus while only isoform 2 is expressed in polyclonal beta-only cells. Isoform 1 shows a predominant expression in immature thymocytes.

Its subcellular location is the membrane. It localises to the cell membrane. Functionally, component of the pre-T-cell receptor complex (composed of PTCRA, TCRB and the CD3 complex) that plays a crucial role in early T-cell development, particularly alpha-beta T cell differentiation. Isoform 1 acts to retain most TCRB intracellularly, while isoform 2 permits higher levels of cell surface TCRB expression and facilitates signaling from the CD3-TCRB complex. This is Pre T-cell antigen receptor alpha from Mus musculus (Mouse).